The chain runs to 115 residues: Large ribosomal subunit protein bL20 (115 aa).

It belongs to the bacterial ribosomal protein bL20 family.

Its function is as follows. Binds directly to 23S ribosomal RNA and is necessary for the in vitro assembly process of the 50S ribosomal subunit. It is not involved in the protein synthesizing functions of that subunit. This is Large ribosomal subunit protein bL20 from Prochlorococcus marinus subsp. pastoris (strain CCMP1986 / NIES-2087 / MED4).